The chain runs to 413 residues: Large ribosomal subunit protein uL4 (413 aa).

The residue at position 2 (Ala-2) is an N-acetylalanine. At Lys-14 the chain carries N6-acetyllysine. Arg-97 bears the Omega-N-methylarginine mark. Residue Lys-106 is modified to N6-acetyllysine. Lys-239 is covalently cross-linked (Glycyl lysine isopeptide (Lys-Gly) (interchain with G-Cter in SUMO2)). Position 259 is an N6-acetyllysine (Lys-259). The residue at position 266 (Thr-266) is a Phosphothreonine. Phosphoserine is present on residues Ser-290 and Ser-295. At Arg-300 the chain carries Citrulline. Lys-327 participates in a covalent cross-link: Glycyl lysine isopeptide (Lys-Gly) (interchain with G-Cter in SUMO2). At Lys-333 the chain carries N6-acetyllysine. The tract at residues 355–413 is disordered; the sequence is AAALAAKSDPKEAPAKKKPVVGKKKKPVVGRKAAAAKKPAADKKAADKRAGPEDKKPAA. Position 361 is an N6-acetyllysine; alternate (Lys-361). A Glycyl lysine isopeptide (Lys-Gly) (interchain with G-Cter in SUMO1); alternate cross-link involves residue Lys-361. At Ser-362 the chain carries Phosphoserine. Positions 370-383 are enriched in basic residues; sequence KKKPVVGKKKKPVV. Over residues 393–413 the composition is skewed to basic and acidic residues; the sequence is PAADKKAADKRAGPEDKKPAA.

It belongs to the universal ribosomal protein uL4 family. As to quaternary structure, component of the large ribosomal subunit. May bind IPO9 with low affinity. Interacts with RBM3. Post-translationally, citrullinated by PADI4.

Its subcellular location is the cytoplasm. Component of the large ribosomal subunit. The ribosome is a large ribonucleoprotein complex responsible for the synthesis of proteins in the cell. This is Large ribosomal subunit protein uL4 (RPL4) from Oryctolagus cuniculus (Rabbit).